The chain runs to 479 residues: 3-isopropylmalate dehydratase large subunit (479 aa).

The [4Fe-4S] cluster site is built by C353, C414, and C417.

Belongs to the aconitase/IPM isomerase family. LeuC type 1 subfamily. In terms of assembly, heterodimer of LeuC and LeuD. [4Fe-4S] cluster is required as a cofactor.

The catalysed reaction is (2R,3S)-3-isopropylmalate = (2S)-2-isopropylmalate. It functions in the pathway amino-acid biosynthesis; L-leucine biosynthesis; L-leucine from 3-methyl-2-oxobutanoate: step 2/4. In terms of biological role, catalyzes the isomerization between 2-isopropylmalate and 3-isopropylmalate, via the formation of 2-isopropylmaleate. This is 3-isopropylmalate dehydratase large subunit from Xanthomonas campestris pv. campestris (strain 8004).